The chain runs to 607 residues: Chaperone protein DnaK (607 aa).

Threonine 173 is modified (phosphothreonine; by autocatalysis). Basic and acidic residues-rich tracts occupy residues 490 to 509 (EQNAEEDKKRREESDLRNEA) and 524 to 542 (GDNVSEDDKKQAEDKKEAL). Disordered stretches follow at residues 490–510 (EQNAEEDKKRREESDLRNEAD), 524–555 (GDNVSEDDKKQAEDKKEALKSALEGQDLEDIK), and 574–607 (QQAQQGDAAGSNQSDVEDAEYTEVKDDDDKKDNK). Polar residues predominate over residues 574–587 (QQAQQGDAAGSNQS). Residues 595-607 (TEVKDDDDKKDNK) are compositionally biased toward basic and acidic residues.

Belongs to the heat shock protein 70 family.

Acts as a chaperone. The sequence is that of Chaperone protein DnaK from Staphylococcus carnosus (strain TM300).